A 447-amino-acid polypeptide reads, in one-letter code: Adenylosuccinate synthetase (447 aa).

GTP contacts are provided by residues 35-41 and 63-65; these read GDEGKGK and GHT. Aspartate 36 functions as the Proton acceptor in the catalytic mechanism. Mg(2+)-binding residues include aspartate 36 and glycine 63. IMP contacts are provided by residues 36–39, 61–64, threonine 153, arginine 167, asparagine 245, threonine 260, and arginine 324; these read DEGK and NAGH. The Proton donor role is filled by histidine 64. Position 320–326 (320–326) interacts with substrate; the sequence is VTTKRKR. Residues arginine 326, 352–354, and 435–437 contribute to the GTP site; these read KLD and GVG.

This sequence belongs to the adenylosuccinate synthetase family. In terms of assembly, homodimer. The cofactor is Mg(2+).

It is found in the cytoplasm. The catalysed reaction is IMP + L-aspartate + GTP = N(6)-(1,2-dicarboxyethyl)-AMP + GDP + phosphate + 2 H(+). It participates in purine metabolism; AMP biosynthesis via de novo pathway; AMP from IMP: step 1/2. In terms of biological role, plays an important role in the de novo pathway and in the salvage pathway of purine nucleotide biosynthesis. Catalyzes the first committed step in the biosynthesis of AMP from IMP. Plays a role in the regulation of adult life span. The sequence is that of Adenylosuccinate synthetase from Drosophila melanogaster (Fruit fly).